The following is a 236-amino-acid chain: Purine nucleoside phosphorylase DeoD-type (236 aa).

His4 is an a purine D-ribonucleoside binding site. Residues Gly20, Arg24, Arg43, and 87–90 each bind phosphate; that span reads RVGT. Residues 179–181 and 203–204 contribute to the a purine D-ribonucleoside site; these read EME and SD. Asp204 functions as the Proton donor in the catalytic mechanism.

Belongs to the PNP/UDP phosphorylase family. In terms of assembly, homohexamer; trimer of homodimers.

It carries out the reaction a purine D-ribonucleoside + phosphate = a purine nucleobase + alpha-D-ribose 1-phosphate. The enzyme catalyses a purine 2'-deoxy-D-ribonucleoside + phosphate = a purine nucleobase + 2-deoxy-alpha-D-ribose 1-phosphate. In terms of biological role, catalyzes the reversible phosphorolytic breakdown of the N-glycosidic bond in the beta-(deoxy)ribonucleoside molecules, with the formation of the corresponding free purine bases and pentose-1-phosphate. This is Purine nucleoside phosphorylase DeoD-type from Streptococcus pneumoniae serotype 2 (strain D39 / NCTC 7466).